The following is a 232-amino-acid chain: Phosphatidylserine decarboxylase proenzyme (232 aa).

The active-site Schiff-base intermediate with substrate; via pyruvic acid is Ser190. The residue at position 190 (Ser190) is a Pyruvic acid (Ser); by autocatalysis.

Belongs to the phosphatidylserine decarboxylase family. PSD-A subfamily. Heterodimer of a large membrane-associated beta subunit and a small pyruvoyl-containing alpha subunit. Pyruvate serves as cofactor. Is synthesized initially as an inactive proenzyme. Formation of the active enzyme involves a self-maturation process in which the active site pyruvoyl group is generated from an internal serine residue via an autocatalytic post-translational modification. Two non-identical subunits are generated from the proenzyme in this reaction, and the pyruvate is formed at the N-terminus of the alpha chain, which is derived from the carboxyl end of the proenzyme. The post-translation cleavage follows an unusual pathway, termed non-hydrolytic serinolysis, in which the side chain hydroxyl group of the serine supplies its oxygen atom to form the C-terminus of the beta chain, while the remainder of the serine residue undergoes an oxidative deamination to produce ammonia and the pyruvoyl prosthetic group on the alpha chain.

It is found in the cell membrane. It catalyses the reaction a 1,2-diacyl-sn-glycero-3-phospho-L-serine + H(+) = a 1,2-diacyl-sn-glycero-3-phosphoethanolamine + CO2. It functions in the pathway phospholipid metabolism; phosphatidylethanolamine biosynthesis; phosphatidylethanolamine from CDP-diacylglycerol: step 2/2. Its function is as follows. Catalyzes the formation of phosphatidylethanolamine (PtdEtn) from phosphatidylserine (PtdSer). The protein is Phosphatidylserine decarboxylase proenzyme of Cereibacter sphaeroides (strain ATCC 17023 / DSM 158 / JCM 6121 / CCUG 31486 / LMG 2827 / NBRC 12203 / NCIMB 8253 / ATH 2.4.1.) (Rhodobacter sphaeroides).